The following is a 196-amino-acid chain: Phosphoheptose isomerase (196 aa).

The SIS domain maps to 36–196 (MAQALQAEGK…LIDQHLFGGA (161 aa)). 51–53 (NGG) is a substrate binding site. Residues histidine 60 and glutamate 64 each contribute to the Zn(2+) site. Substrate is bound by residues glutamate 64, 93–94 (ND), 119–121 (STS), serine 124, and glutamine 174. Glutamine 174 and histidine 182 together coordinate Zn(2+).

The protein belongs to the SIS family. GmhA subfamily. Homotetramer. Zn(2+) is required as a cofactor.

It is found in the cytoplasm. It catalyses the reaction 2 D-sedoheptulose 7-phosphate = D-glycero-alpha-D-manno-heptose 7-phosphate + D-glycero-beta-D-manno-heptose 7-phosphate. The protein operates within carbohydrate biosynthesis; D-glycero-D-manno-heptose 7-phosphate biosynthesis; D-glycero-alpha-D-manno-heptose 7-phosphate and D-glycero-beta-D-manno-heptose 7-phosphate from sedoheptulose 7-phosphate: step 1/1. In terms of biological role, catalyzes the isomerization of sedoheptulose 7-phosphate in D-glycero-D-manno-heptose 7-phosphate. This Alkalilimnicola ehrlichii (strain ATCC BAA-1101 / DSM 17681 / MLHE-1) protein is Phosphoheptose isomerase.